A 156-amino-acid chain; its full sequence is Aspartate 1-decarboxylase (156 aa).

Ser-29 acts as the Schiff-base intermediate with substrate; via pyruvic acid in catalysis. Ser-29 bears the Pyruvic acid (Ser) mark. Residue Thr-61 participates in substrate binding. Tyr-62 (proton donor) is an active-site residue. 77–79 (GAA) provides a ligand contact to substrate.

This sequence belongs to the PanD family. Heterooctamer of four alpha and four beta subunits. Pyruvate serves as cofactor. Is synthesized initially as an inactive proenzyme, which is activated by self-cleavage at a specific serine bond to produce a beta-subunit with a hydroxyl group at its C-terminus and an alpha-subunit with a pyruvoyl group at its N-terminus.

The protein localises to the cytoplasm. It catalyses the reaction L-aspartate + H(+) = beta-alanine + CO2. The protein operates within cofactor biosynthesis; (R)-pantothenate biosynthesis; beta-alanine from L-aspartate: step 1/1. Functionally, catalyzes the pyruvoyl-dependent decarboxylation of aspartate to produce beta-alanine. This is Aspartate 1-decarboxylase from Rhodopirellula baltica (strain DSM 10527 / NCIMB 13988 / SH1).